A 541-amino-acid chain; its full sequence is Zinc finger CCHC domain-containing protein 7 (541 aa).

The interval A111 to G144 is disordered. Residues Q116–V126 are compositionally biased toward polar residues. Glycyl lysine isopeptide (Lys-Gly) (interchain with G-Cter in SUMO2) cross-links involve residues K129, K136, K138, K234, and K249. 3 CCHC-type zinc fingers span residues V236–L253, R258–A275, and K299–E316. K334 participates in a covalent cross-link: Glycyl lysine isopeptide (Lys-Gly) (interchain with G-Cter in SUMO2). The segment at V343–E360 adopts a CCHC-type 4 zinc-finger fold. The interval V394 to L541 is disordered. Glycyl lysine isopeptide (Lys-Gly) (interchain with G-Cter in SUMO2) cross-links involve residues K408 and K431. A compositionally biased stretch (basic residues) spans R418–R434. A compositionally biased stretch (basic and acidic residues) spans W435–G452. A Glycyl lysine isopeptide (Lys-Gly) (interchain with G-Cter in SUMO2) cross-link involves residue K473. The span at P474–S486 shows a compositional bias: polar residues. S477 carries the post-translational modification Phosphoserine. Residues K484 and K487 each participate in a glycyl lysine isopeptide (Lys-Gly) (interchain with G-Cter in SUMO2) cross-link. Over residues K487–R497 the composition is skewed to basic residues. 2 stretches are compositionally biased toward basic and acidic residues: residues L498 to R509 and S517 to F527. K530 participates in a covalent cross-link: Glycyl lysine isopeptide (Lys-Gly) (interchain with G-Cter in SUMO2). The segment covering K530 to L541 has biased composition (basic residues).

Component of a nucleolar TRAMP-like complex, an ATP-dependent exosome regulatory complex consisting of a helicase (MTREX), an oligadenylate polymerase (TENT4B or TENT4A), and a substrate specific RNA-binding factor (ZCCHC7 or ZCCHC8). Several TRAMP-like complexes exist with specific compositions and are associated with nuclear, or nucleolar RNA exosomes.

The protein localises to the nucleus. It is found in the nucleolus. The polypeptide is Zinc finger CCHC domain-containing protein 7 (Zcchc7) (Mus musculus (Mouse)).